The chain runs to 379 residues: uncharacterized protein (379 aa).

It belongs to the herpesviridae US22 family.

This is an uncharacterized protein from Human cytomegalovirus (strain AD169) (HHV-5).